The primary structure comprises 373 residues: MPLQPFKTSNLLTMGVELELQLISLSNFDLTAASPDILELLGRSSFPGSFTPEITESMLEIATDVHEEYDQLLKQLFHIRDALVTVGDRLNIGICGGGTHPFQMWSDQRIFNKTRFIEVSELYGYLTKQFTIFGQHIHIGCEDGNQALFLLHSLNRYIPHFIALSASSPFVQSKDTLYNSARLNSVFAFPLSGRAPFVLNWDEFSLGYFEKMEHTGIVKSMKDFYWDLRPKPEFGTIEMRVCDSPLTVERAAALACYMQALCSYLLENKEPLPHEDDYLVYNYNRFQACRFGLDGTLVHPKTYEQILLREDILTTLRRLKPYANQLNSTMALEHIYEITHKGSDASFLREKYAEHRTLESVVNESLKQFRRSK.

It belongs to the glutamate--cysteine ligase type 2 family. YbdK subfamily.

The catalysed reaction is L-cysteine + L-glutamate + ATP = gamma-L-glutamyl-L-cysteine + ADP + phosphate + H(+). ATP-dependent carboxylate-amine ligase which exhibits weak glutamate--cysteine ligase activity. The polypeptide is Putative glutamate--cysteine ligase 2-2 (Legionella pneumophila (strain Corby)).